Consider the following 62-residue polypeptide: Photosystem II reaction center protein Z (62 aa).

A run of 2 helical transmembrane segments spans residues 8 to 28 (VLTALVFFSFVMVVAVPVAYA) and 41 to 61 (YVGSAIWIGLVLLVAILNFLV).

It belongs to the PsbZ family. As to quaternary structure, PSII is composed of 1 copy each of membrane proteins PsbA, PsbB, PsbC, PsbD, PsbE, PsbF, PsbH, PsbI, PsbJ, PsbK, PsbL, PsbM, PsbT, PsbX, PsbY, PsbZ, Psb30/Ycf12, peripheral proteins PsbO, CyanoQ (PsbQ), PsbU, PsbV and a large number of cofactors. It forms dimeric complexes.

Its subcellular location is the cellular thylakoid membrane. Its function is as follows. May control the interaction of photosystem II (PSII) cores with the light-harvesting antenna, regulates electron flow through the 2 photosystem reaction centers. PSII is a light-driven water plastoquinone oxidoreductase, using light energy to abstract electrons from H(2)O, generating a proton gradient subsequently used for ATP formation. This Crocosphaera subtropica (strain ATCC 51142 / BH68) (Cyanothece sp. (strain ATCC 51142)) protein is Photosystem II reaction center protein Z.